The chain runs to 512 residues: HMG box-containing protein 1 (512 aa).

The tract at residues 151 to 180 (RPPPVASSKGEPAFPHHWKEQTPVRHERAN) is disordered. Positions 167-180 (HWKEQTPVRHERAN) are enriched in basic and acidic residues. Residues 201–343 (WCNSWPSTAW…PPGHPDAINF (143 aa)) enclose the AXH domain. Positions 432-500 (CKRPMNAFML…EQKRLNPDCW (69 aa)) form a DNA-binding region, HMG box.

As to quaternary structure, binds TCF4. Binds RB1. Binds the second PAH repeat of SIN3A. In terms of processing, ubiquitinated by the CTLH E3 ubiquitin-protein ligase complex, leading to subsequent proteasomal degradation.

The protein localises to the nucleus. Functionally, transcriptional repressor that binds to the promoter region of target genes. Plays a role in the regulation of the cell cycle and of the Wnt pathway. Binds preferentially to the sequence 5'-TTCATTCATTCA-3'. Binding to the histone H1.0 promoter is enhanced by interaction with RB1. Disrupts the interaction between DNA and TCF4. This chain is HMG box-containing protein 1 (HBP1), found in Bos taurus (Bovine).